The sequence spans 641 residues: 1,3-beta-glucanosyltransferase PGA5 (641 aa).

Residues 1 to 23 (MTTLSTIWLFLITITAIFQLGLS) form the signal peptide. An N-linked (GlcNAc...) asparagine glycan is attached at Asn25. Cys106 and Cys135 are disulfide-bonded. (1,3-beta-D-glucosyl)n is bound by residues Tyr124, Asn192, Glu193, Asp234, and Arg239. Glu193 functions as the Proton donor in the catalytic mechanism. 6 disulfides stabilise this stretch: Cys248-Cys390, Cys276-Cys307, Cys424-Cys474, Cys426-Cys528, Cys433-Cys498, and Cys451-Cys456. The active-site Nucleophile is Glu304. Tyr336 is a binding site for (1,3-beta-D-glucosyl)n. The segment at 535–613 (KEEEKEVQEE…SPKTSKSIAG (79 aa)) is disordered. The span at 571 to 581 (KSKEKEKGKLI) shows a compositional bias: basic and acidic residues. Over residues 582 to 593 (EEEEEEEEEEEE) the composition is skewed to acidic residues. The span at 596 to 610 (KTPSSGEKSPKTSKS) shows a compositional bias: polar residues. Asn621 carries an N-linked (GlcNAc...) asparagine glycan. The GPI-anchor amidated aspartate moiety is linked to residue Asp622. The propeptide at 623 to 641 (SIWKTFIEILFTCSAAILI) is removed in mature form.

It belongs to the glycosyl hydrolase 72 family.

The protein resides in the cell membrane. Functionally, splits internally a 1,3-beta-glucan molecule and transfers the newly generated reducing end (the donor) to the non-reducing end of another 1,3-beta-glucan molecule (the acceptor) forming a 1,3-beta linkage, resulting in the elongation of 1,3-beta-glucan chains in the cell wall. Involved in spore wall assembly. The chain is 1,3-beta-glucanosyltransferase PGA5 (PGA5) from Candida albicans (strain SC5314 / ATCC MYA-2876) (Yeast).